A 452-amino-acid polypeptide reads, in one-letter code: Probable phosphoglucosamine mutase (452 aa).

Ser96 (phosphoserine intermediate) is an active-site residue. Mg(2+)-binding residues include Ser96, Asp233, Asp235, and Asp237. At Ser96 the chain carries Phosphoserine.

It belongs to the phosphohexose mutase family. Requires Mg(2+) as cofactor. Activated by phosphorylation.

The enzyme catalyses alpha-D-glucosamine 1-phosphate = D-glucosamine 6-phosphate. In terms of biological role, catalyzes the conversion of glucosamine-6-phosphate to glucosamine-1-phosphate. The chain is Probable phosphoglucosamine mutase from Pyrococcus furiosus (strain ATCC 43587 / DSM 3638 / JCM 8422 / Vc1).